The primary structure comprises 193 residues: Inosine triphosphate pyrophosphatase (193 aa).

Thr-10–Lys-15 provides a ligand contact to ITP. Mg(2+) is bound at residue Glu-42. ITP-binding positions include Lys-54, Asp-70–Thr-71, Lys-87, Phe-146–Asp-149, Lys-169, and His-174–Arg-175.

It belongs to the HAM1 NTPase family. In terms of assembly, homodimer. Mg(2+) is required as a cofactor. It depends on Mn(2+) as a cofactor.

Its subcellular location is the cytoplasm. It localises to the nucleus. It carries out the reaction ITP + H2O = IMP + diphosphate + H(+). The enzyme catalyses dITP + H2O = dIMP + diphosphate + H(+). It catalyses the reaction XTP + H2O = XMP + diphosphate + H(+). Pyrophosphatase that hydrolyzes non-canonical purine nucleotides such as inosine triphosphate (ITP), deoxyinosine triphosphate (dITP) or xanthosine 5'-triphosphate (XTP) to their respective monophosphate derivatives. The enzyme does not distinguish between the deoxy- and ribose forms. Probably excludes non-canonical purines from RNA and DNA precursor pools, thus preventing their incorporation into RNA and DNA and avoiding chromosomal lesions. The protein is Inosine triphosphate pyrophosphatase of Mycosarcoma maydis (Corn smut fungus).